A 130-amino-acid chain; its full sequence is Small ribosomal subunit protein uS11c (130 aa).

The protein belongs to the universal ribosomal protein uS11 family. Part of the 30S ribosomal subunit.

It is found in the plastid. Its subcellular location is the chloroplast. The sequence is that of Small ribosomal subunit protein uS11c from Marsilea quadrifolia (European water clover).